The primary structure comprises 75 residues: MSGCNCGSSCNCGDSCKCNKRSSGLNYVEAETTETVILGVGPAKIQFEDAEMGVAAEDSGCKCGSSCTCDPCNCK.

This sequence belongs to the metallothionein superfamily. Type 15 family.

Metallothioneins have a high content of cysteine residues that bind various heavy metals. The protein is Metallothionein-like protein 1 (MT1B) of Trifolium repens (Creeping white clover).